Reading from the N-terminus, the 1464-residue chain is DNA polymerase III PolC-type (1464 aa).

The 157-residue stretch at 426–582 (YVVFDVETTG…YDAEATGRLL (157 aa)) folds into the Exonuclease domain.

This sequence belongs to the DNA polymerase type-C family. PolC subfamily.

Its subcellular location is the cytoplasm. The enzyme catalyses DNA(n) + a 2'-deoxyribonucleoside 5'-triphosphate = DNA(n+1) + diphosphate. Functionally, required for replicative DNA synthesis. This DNA polymerase also exhibits 3' to 5' exonuclease activity. The protein is DNA polymerase III PolC-type of Streptococcus thermophilus (strain ATCC BAA-250 / LMG 18311).